A 560-amino-acid polypeptide reads, in one-letter code: Oxygen-dependent choline dehydrogenase (560 aa).

6-35 (DYIIIGGGSAGSVLGSRISEDVSNNVLVLE) contributes to the FAD binding site. Residue histidine 472 is the Proton acceptor of the active site.

It belongs to the GMC oxidoreductase family. It depends on FAD as a cofactor.

It catalyses the reaction choline + A = betaine aldehyde + AH2. It carries out the reaction betaine aldehyde + NAD(+) + H2O = glycine betaine + NADH + 2 H(+). The protein operates within amine and polyamine biosynthesis; betaine biosynthesis via choline pathway; betaine aldehyde from choline (cytochrome c reductase route): step 1/1. Functionally, involved in the biosynthesis of the osmoprotectant glycine betaine. Catalyzes the oxidation of choline to betaine aldehyde and betaine aldehyde to glycine betaine at the same rate. In Staphylococcus saprophyticus subsp. saprophyticus (strain ATCC 15305 / DSM 20229 / NCIMB 8711 / NCTC 7292 / S-41), this protein is Oxygen-dependent choline dehydrogenase.